We begin with the raw amino-acid sequence, 358 residues long: Dynein axonemal assembly factor 10 (358 aa).

6 WD repeats span residues 64 to 106 (EKSK…SPVY), 116 to 155 (NAID…TPVV), 163 to 206 (ETKR…LRWE), 208 to 250 (NIRN…PSKG), 258 to 298 (AHKS…QRSK), and 320 to 358 (LSTQ…LNTV).

Interacts with PIH1D1; the interaction associates DNAAF10 with the R2TP complex. Interacts with several dynein axonemal assembly factors.

It is found in the dynein axonemal particle. Key assembly factor specifically required for the stability of axonemal dynein heavy chains in cytoplasm. The protein is Dynein axonemal assembly factor 10 (dnaaf10) of Danio rerio (Zebrafish).